A 116-amino-acid chain; its full sequence is Early 4 ORF3 protein (116 aa).

This sequence belongs to the adenoviridae E4 ORF3 family. As to quaternary structure, homodimer. Multimerizes through C-terminus tail by reciprocal or nonreciprocal interactions. Interacts with host PML isoform 2 C-terminal disordered region. Interacts with E1B-55k; this interaction is necessary for E1B 55 kDa protein to localize to the nuclear matrix fraction of the cell. May interact with host TRIM24, CREBBP, EP300, PRKDC and the MRN complex MRE11/RAD50/NBS1; these interactions may happen through nuclear bodies complexes.

The protein localises to the host nucleus. In terms of biological role, forms a multivalent network in host nucleus that inhibits nuclear bodies and prevents antiviral cellular activities. The network is made of multimerized dimers and surrounds adenovirus replication centers and nucleolus. Plays a role in splicing of the major late transcript. Prevents viral genome concatemer formation. The polypeptide is Early 4 ORF3 protein (Human adenovirus C serotype 2 (HAdV-2)).